Reading from the N-terminus, the 327-residue chain is Lipoyl synthase (327 aa).

Residues C72, C77, C83, C98, C102, C105, and S313 each contribute to the [4Fe-4S] cluster site. Residues 83–302 (CWSHGTATIM…RKVGLEKGFL (220 aa)) form the Radical SAM core domain.

This sequence belongs to the radical SAM superfamily. Lipoyl synthase family. The cofactor is [4Fe-4S] cluster.

It is found in the cytoplasm. It carries out the reaction [[Fe-S] cluster scaffold protein carrying a second [4Fe-4S](2+) cluster] + N(6)-octanoyl-L-lysyl-[protein] + 2 oxidized [2Fe-2S]-[ferredoxin] + 2 S-adenosyl-L-methionine + 4 H(+) = [[Fe-S] cluster scaffold protein] + N(6)-[(R)-dihydrolipoyl]-L-lysyl-[protein] + 4 Fe(3+) + 2 hydrogen sulfide + 2 5'-deoxyadenosine + 2 L-methionine + 2 reduced [2Fe-2S]-[ferredoxin]. It functions in the pathway protein modification; protein lipoylation via endogenous pathway; protein N(6)-(lipoyl)lysine from octanoyl-[acyl-carrier-protein]: step 2/2. In terms of biological role, catalyzes the radical-mediated insertion of two sulfur atoms into the C-6 and C-8 positions of the octanoyl moiety bound to the lipoyl domains of lipoate-dependent enzymes, thereby converting the octanoylated domains into lipoylated derivatives. The chain is Lipoyl synthase from Francisella tularensis subsp. mediasiatica (strain FSC147).